We begin with the raw amino-acid sequence, 364 residues long: Aminomethyltransferase (364 aa).

Belongs to the GcvT family. In terms of assembly, the glycine cleavage system is composed of four proteins: P, T, L and H.

It carries out the reaction N(6)-[(R)-S(8)-aminomethyldihydrolipoyl]-L-lysyl-[protein] + (6S)-5,6,7,8-tetrahydrofolate = N(6)-[(R)-dihydrolipoyl]-L-lysyl-[protein] + (6R)-5,10-methylene-5,6,7,8-tetrahydrofolate + NH4(+). Functionally, the glycine cleavage system catalyzes the degradation of glycine. In Shewanella woodyi (strain ATCC 51908 / MS32), this protein is Aminomethyltransferase.